We begin with the raw amino-acid sequence, 502 residues long: Beta-glucosidase 7 (502 aa).

The N-terminal stretch at 1 to 22 (MKPFSQFFVFVVTVSATSYIDA) is a signal peptide. A beta-D-glucoside contacts are provided by residues glutamine 42, histidine 140, and 185 to 186 (NE). Glutamate 186 (proton donor) is an active-site residue. Residue asparagine 208 is glycosylated (N-linked (GlcNAc...) asparagine). Tyrosine 325 provides a ligand contact to a beta-D-glucoside. Asparagine 359 is a glycosylation site (N-linked (GlcNAc...) asparagine). Glutamate 392 provides a ligand contact to a beta-D-glucoside. The active-site Nucleophile is glutamate 392. Asparagine 425 is a glycosylation site (N-linked (GlcNAc...) asparagine). A beta-D-glucoside contacts are provided by tryptophan 435 and tyrosine 451. 2 N-linked (GlcNAc...) asparagine glycosylation sites follow: asparagine 457 and asparagine 479.

The protein belongs to the glycosyl hydrolase 1 family.

The enzyme catalyses Hydrolysis of terminal, non-reducing beta-D-glucosyl residues with release of beta-D-glucose.. This chain is Beta-glucosidase 7, found in Arabidopsis thaliana (Mouse-ear cress).